A 1593-amino-acid polypeptide reads, in one-letter code: DNA-directed RNA polymerase subunit beta' (1593 aa).

Residues Cys74, Cys76, Cys89, and Cys92 each contribute to the Zn(2+) site. The Mg(2+) site is built by Asp648, Asp650, and Asp652. Zn(2+)-binding residues include Cys1026, Cys1100, Cys1107, and Cys1110.

This sequence belongs to the RNA polymerase beta' chain family. The RNAP catalytic core consists of 2 alpha, 1 beta, 1 beta' and 1 omega subunit. When a sigma factor is associated with the core the holoenzyme is formed, which can initiate transcription. It depends on Mg(2+) as a cofactor. Zn(2+) is required as a cofactor.

The catalysed reaction is RNA(n) + a ribonucleoside 5'-triphosphate = RNA(n+1) + diphosphate. In terms of biological role, DNA-dependent RNA polymerase catalyzes the transcription of DNA into RNA using the four ribonucleoside triphosphates as substrates. The chain is DNA-directed RNA polymerase subunit beta' from Endomicrobium trichonymphae.